The sequence spans 229 residues: Isopentenyl-diphosphate delta-isomerase (229 aa).

Residue Lys39 coordinates substrate. Mg(2+) is bound by residues His43 and His54. Positions 52-202 (LLHRAFSMFI…QYGFTPWFKL (151 aa)) constitute a Nudix hydrolase domain. Positions 72 and 77 each coordinate substrate. Residue Cys89 is part of the active site. Residue Ser90 coordinates substrate. Residues Glu152 and Glu154 each contribute to the Mg(2+) site. Glu154 is an active-site residue.

Belongs to the IPP isomerase type 1 family. Mg(2+) is required as a cofactor.

It is found in the cytoplasm. Its subcellular location is the nucleus. The enzyme catalyses isopentenyl diphosphate = dimethylallyl diphosphate. Its pathway is isoprenoid biosynthesis; dimethylallyl diphosphate biosynthesis; dimethylallyl diphosphate from isopentenyl diphosphate: step 1/1. In terms of biological role, isopentenyl-diphosphate delta-isomerase; part of the second module of ergosterol biosynthesis pathway that includes the middle steps of the pathway. Idi1 catalyzes the 1,3-allylic rearrangement of isopentenyl (IPP) to its highly electrophilic allylic isomer, dimethylallyl diphosphate (DMAPP). The second module is carried out in the vacuole and involves the formation of farnesyl diphosphate, which is also an important intermediate in the biosynthesis of ubiquinone, dolichol, heme and prenylated proteins. Activity by the mevalonate kinase erg12 first converts mevalonate into 5-phosphomevalonate. 5-phosphomevalonate is then further converted to 5-diphosphomevalonate by the phosphomevalonate kinase erg8. The diphosphomevalonate decarboxylase mvd1 then produces isopentenyl diphosphate. The isopentenyl-diphosphate delta-isomerase idi1 then catalyzes the 1,3-allylic rearrangement of the homoallylic substrate isopentenyl (IPP) to its highly electrophilic allylic isomer, dimethylallyl diphosphate (DMAPP). Finally the farnesyl diphosphate synthase fps1 catalyzes the sequential condensation of isopentenyl pyrophosphate with dimethylallyl pyrophosphate, and then with the resultant geranylpyrophosphate to the ultimate product farnesyl pyrophosphate. The chain is Isopentenyl-diphosphate delta-isomerase from Schizosaccharomyces pombe (strain 972 / ATCC 24843) (Fission yeast).